Consider the following 528-residue polypeptide: Propionate catabolism operon regulatory protein (528 aa).

Residues 218 to 461 (MLGQSPQMEQ…RNMMERLALF (244 aa)) enclose the Sigma-54 factor interaction domain. 318–327 (AHGGTLFLDE) contacts ATP. Positions 508–527 (KTAAANYLGISRTTFWRRLK) form a DNA-binding region, H-T-H motif.

Its function is as follows. Involved in the transcriptional regulation of the propionate catabolism operon. This Escherichia coli (strain K12) protein is Propionate catabolism operon regulatory protein (prpR).